The following is a 69-amino-acid chain: Beta-defensin 1 (69 aa).

A signal peptide spans 1 to 21; the sequence is MKTHYFLLVMLFFLFSQMELG. A propeptide spanning residues 22–32 is cleaved from the precursor; sequence AGILTSLGRRT. 3 cysteine pairs are disulfide-bonded: cysteine 37–cysteine 66, cysteine 44–cysteine 59, and cysteine 49–cysteine 67.

The protein belongs to the beta-defensin family. Monomer. Homodimer. Highly expressed in kidney.

It localises to the secreted. The protein localises to the membrane. Has bactericidal activity. May act as a ligand for C-C chemokine receptor CCR6. Positively regulates the sperm motility and bactericidal activity in a CCR6-dependent manner. Binds to CCR6 and triggers Ca2+ mobilization in the sperm which is important for its motility. The polypeptide is Beta-defensin 1 (Defb1) (Rattus norvegicus (Rat)).